Here is a 425-residue protein sequence, read N- to C-terminus: Kynureninase (425 aa).

Residues L105, T106, 133 to 136 (FPSD), D218, H221, and Y243 each bind pyridoxal 5'-phosphate. N6-(pyridoxal phosphate)lysine is present on K244. Pyridoxal 5'-phosphate contacts are provided by W274 and N302.

This sequence belongs to the kynureninase family. Homodimer. Pyridoxal 5'-phosphate serves as cofactor.

It catalyses the reaction L-kynurenine + H2O = anthranilate + L-alanine + H(+). It carries out the reaction 3-hydroxy-L-kynurenine + H2O = 3-hydroxyanthranilate + L-alanine + H(+). It functions in the pathway amino-acid degradation; L-kynurenine degradation; L-alanine and anthranilate from L-kynurenine: step 1/1. It participates in cofactor biosynthesis; NAD(+) biosynthesis; quinolinate from L-kynurenine: step 2/3. Functionally, catalyzes the cleavage of L-kynurenine (L-Kyn) and L-3-hydroxykynurenine (L-3OHKyn) into anthranilic acid (AA) and 3-hydroxyanthranilic acid (3-OHAA), respectively. The sequence is that of Kynureninase from Flavobacterium psychrophilum (strain ATCC 49511 / DSM 21280 / CIP 103535 / JIP02/86).